Here is a 139-residue protein sequence, read N- to C-terminus: MNIEEIMKILPHRYPFLLVDGVLELNEEKIKAFKNVSINESFFQGHFPNYPIMPGVLIVEGMAQTAGLLLLKDTDENVIPLFTGIDKARFKKEVRPGDKLIYDLEILQKKANMFKLKGIATVEEQVCAQAEIMVGIKKS.

Histidine 46 is an active-site residue.

The protein belongs to the thioester dehydratase family. FabZ subfamily.

The protein localises to the cytoplasm. It carries out the reaction a (3R)-hydroxyacyl-[ACP] = a (2E)-enoyl-[ACP] + H2O. Involved in unsaturated fatty acids biosynthesis. Catalyzes the dehydration of short chain beta-hydroxyacyl-ACPs and long chain saturated and unsaturated beta-hydroxyacyl-ACPs. The protein is 3-hydroxyacyl-[acyl-carrier-protein] dehydratase FabZ of Petrotoga mobilis (strain DSM 10674 / SJ95).